The sequence spans 191 residues: Molybdenum cofactor guanylyltransferase (191 aa).

Residues 13–15 (LAG), lysine 26, aspartate 72, and aspartate 102 each bind GTP. Aspartate 102 lines the Mg(2+) pocket.

It belongs to the MobA family. Monomer. It depends on Mg(2+) as a cofactor.

The protein localises to the cytoplasm. It carries out the reaction Mo-molybdopterin + GTP + H(+) = Mo-molybdopterin guanine dinucleotide + diphosphate. Its function is as follows. Transfers a GMP moiety from GTP to Mo-molybdopterin (Mo-MPT) cofactor (Moco or molybdenum cofactor) to form Mo-molybdopterin guanine dinucleotide (Mo-MGD) cofactor. The chain is Molybdenum cofactor guanylyltransferase from Pseudomonas putida (strain ATCC 700007 / DSM 6899 / JCM 31910 / BCRC 17059 / LMG 24140 / F1).